The sequence spans 202 residues: PXMP2/4 family protein 1 (202 aa).

Helical transmembrane passes span 21–41, 54–72, 138–154, and 161–177; these read PVIT…TLAQ, LMMC…HFWF, KAWM…FRFV, and LISN…LSTV.

Belongs to the peroxisomal membrane protein PXMP2/4 family.

The protein localises to the membrane. The sequence is that of PXMP2/4 family protein 1 from Dictyostelium discoideum (Social amoeba).